A 428-amino-acid chain; its full sequence is Protein CANDIDATE G-PROTEIN COUPLED RECEPTOR 6 (428 aa).

Residues 1–22 form the signal peptide; sequence MTILPFLAAVFVLQLLSTLTVA. N-linked (GlcNAc...) asparagine glycosylation is found at N31, N89, and N157. 7 consecutive transmembrane segments (helical) span residues 173–193, 202–222, 238–258, 276–296, 310–330, 356–376, and 385–405; these read LYLV…CFCW, IHLL…CAAV, IVFY…IVLI, LLVI…VIGE, IFFL…VWSM, FYVL…VMKM, and VSNA…FYMF.

It belongs to the LU7TM family.

The protein localises to the membrane. G-protein coupled receptor. Plays a role in plants and microbes interactions. The sequence is that of Protein CANDIDATE G-PROTEIN COUPLED RECEPTOR 6 from Arabidopsis thaliana (Mouse-ear cress).